The chain runs to 204 residues: Per os infectivity factor 3 (204 aa).

Forms the PIF complex together with PIF1 and PIF2. The complex also interacts with per os infectivity factor PIF0.

Its function is as follows. Per os factor that plays a role in the initiation of host midgut infection. Unlike PIF1 and PIF2, PIF3 is not involved in specific binding of occluded virions (ODV) to the host midgut target cells. This chain is Per os infectivity factor 3 (AC115), found in Lepidoptera (butterflies and moths).